Here is a 152-residue protein sequence, read N- to C-terminus: Ribosome maturation factor RimP (152 aa).

Belongs to the RimP family.

It is found in the cytoplasm. Functionally, required for maturation of 30S ribosomal subunits. The protein is Ribosome maturation factor RimP of Clostridium beijerinckii (strain ATCC 51743 / NCIMB 8052) (Clostridium acetobutylicum).